Consider the following 413-residue polypeptide: Arginine biosynthesis bifunctional protein ArgJ (413 aa).

Substrate is bound by residues T158, K184, T195, E285, N408, and S413. T195 (nucleophile) is an active-site residue.

It belongs to the ArgJ family. As to quaternary structure, heterotetramer of two alpha and two beta chains.

Its subcellular location is the cytoplasm. It carries out the reaction N(2)-acetyl-L-ornithine + L-glutamate = N-acetyl-L-glutamate + L-ornithine. It catalyses the reaction L-glutamate + acetyl-CoA = N-acetyl-L-glutamate + CoA + H(+). The protein operates within amino-acid biosynthesis; L-arginine biosynthesis; L-ornithine and N-acetyl-L-glutamate from L-glutamate and N(2)-acetyl-L-ornithine (cyclic): step 1/1. It functions in the pathway amino-acid biosynthesis; L-arginine biosynthesis; N(2)-acetyl-L-ornithine from L-glutamate: step 1/4. Catalyzes two activities which are involved in the cyclic version of arginine biosynthesis: the synthesis of N-acetylglutamate from glutamate and acetyl-CoA as the acetyl donor, and of ornithine by transacetylation between N(2)-acetylornithine and glutamate. This chain is Arginine biosynthesis bifunctional protein ArgJ, found in Agrobacterium fabrum (strain C58 / ATCC 33970) (Agrobacterium tumefaciens (strain C58)).